A 237-amino-acid polypeptide reads, in one-letter code: Protein ULTRAPETALA 1 (237 aa).

In terms of domain architecture, SAND spans 18 to 116 (EELQEMSGVN…SKTVLLKYYN (99 aa)). The segment at 133–191 (VCHRDEFVGCNDCGKERRFRLRSRDECRLHHNAMGDPNWKCSDFPYDKITCEEEEERGS) adopts a CW-type zinc-finger fold.

In terms of assembly, interacts with HHO5. Associates with ATX1 for trimethylating 'Lys-4' on histone H3 (H3K4me3) at flower MADS box gene loci. In terms of tissue distribution, expressed at low levels in seedlings, roots, shoots, leaves, stems, inflorescences, pollen, flowers and siliques, with highest levels dividing tissues including inflorescence.

Its subcellular location is the cytoplasm. It is found in the nucleus. In terms of biological role, putative transcription factor that acts as a key negative regulator of cell accumulation in shoot and floral meristems. Negatively regulates the size of the WUSCHEL (WUS)-expressing organizing center in inflorescence meristems. May act by down-regulating expression of WUS. Acts as an antirepressor that counteracts EMF1 action through modulation of trimethylated 'Lys-4' on histone H3 (H3K4me3) marks on target gene loci (including genes involved in salt stress response and flower development). Collaboratively with RBL and CYP40/SQN, influences floral meristem (FM) determinacy in an AGAMOUS and SUPERMAN-dependent manner, thus contributing to the floral developmental homeostasis. This is Protein ULTRAPETALA 1 from Arabidopsis thaliana (Mouse-ear cress).